The following is a 372-amino-acid chain: Serine protease 44 (372 aa).

The N-terminal stretch at 1 to 25 (MAFQGCDCFGLLVWLLLLQTRLGKA) is a signal peptide. Over 26–351 (RMVPGTPSLS…KELSRASCWK (326 aa)) the chain is Extracellular. Residues 31 to 72 (TPSLSPLPSENGLDDSGVNPQERPLTGMPETSLPRKPGDSTR) are disordered. Residues 112–345 (IVGGRPAPAR…YRDWIIKELS (234 aa)) enclose the Peptidase S1 domain. An intrachain disulfide couples cysteine 137 to cysteine 153. Active-site charge relay system residues include histidine 152 and aspartate 197. Residue asparagine 208 is glycosylated (N-linked (GlcNAc...) asparagine). Disulfide bonds link cysteine 231–cysteine 303, cysteine 262–cysteine 283, and cysteine 293–cysteine 321. Serine 297 functions as the Charge relay system in the catalytic mechanism. The chain crosses the membrane as a helical span at residues 352–372 (LSGFLVLSVCLVLHLAIVVAL).

The protein belongs to the peptidase S1 family. As to expression, testis-specific. Expressed by primary and secondary spermatocytes.

It is found in the membrane. The protein resides in the cytoplasm. Its function is as follows. Lacks protease activity in vitro. This is Serine protease 44 from Mus musculus (Mouse).